The following is a 123-amino-acid chain: MQNKIQVKSVEKRENALIFCAENSEIEVKGLSARNHVLVDSDNLSFIYILENESSFIYVSIPHTCWEAMHEAMNNDVVMFVRVNDIEMELEGLKEEVEYLVENIEGNANYGEELVTAVEKVFL.

The protein belongs to the UPF0738 family.

This is UPF0738 protein BCE33L1094 from Bacillus cereus (strain ZK / E33L).